A 501-amino-acid polypeptide reads, in one-letter code: Glucose-6-phosphate exchanger SLC37A2 (501 aa).

A helical membrane pass occupies residues 19–39 (SWFRGFILLLTFLIYACYHMS). N-linked (GlcNAc...) asparagine glycosylation is found at Asn53, Asn62, and Asn68. The next 5 membrane-spanning stretches (helical) occupy residues 88–108 (GAVDNAFLVAYAIGMFISGIF), 118–140 (LSAGMVLSGLFTSLFGLGYFWNI), 142–164 (MLWYFVLIQICNGLVQTTGWPSV), 179–199 (FIMGIWNSHTSVGNILGSLIA), and 210–230 (SFIVPGIITAIMGVITFLFLI). Positions 240–252 (PPRHHDDPEKEQD) are enriched in basic and acidic residues. The disordered stretch occupies residues 240–266 (PPRHHDDPEKEQDNPEDPVNSPYSSRE). The next 6 membrane-spanning stretches (helical) occupy residues 303–323 (CLLFAKLVSYTFLYWLPLYIF), 334–354 (GDLSTLFDVGGIIGGIMAGLI), 362–382 (ATTCCIMLILAAPMMFLYNYI), 391–411 (IVMLIICGVLVNGPYALITTA), 434–454 (AIIDGTGSIGAALGPLLAGLI), and 462–482 (VFYMLISADVLACLLLCRLVY).

This sequence belongs to the major facilitator superfamily. Organophosphate:Pi antiporter (OPA) (TC 2.A.1.4) family. Highly expressed in bone marrow derived macrophages, and weakly in spleen.

Its subcellular location is the endoplasmic reticulum membrane. The catalysed reaction is D-glucose 6-phosphate(in) + phosphate(out) = D-glucose 6-phosphate(out) + phosphate(in). Its activity is regulated as follows. Inhibited by vanadate but not by chlorogenic acid. In terms of biological role, inorganic phosphate and glucose-6-phosphate antiporter. May transport cytoplasmic glucose-6-phosphate into the lumen of the endoplasmic reticulum and translocate inorganic phosphate into the opposite direction. Independent of a lumenal glucose-6-phosphatase. May not play a role in homeostatic regulation of blood glucose levels. In Mus musculus (Mouse), this protein is Glucose-6-phosphate exchanger SLC37A2.